The primary structure comprises 690 residues: Ligand of Numb protein X 2 (690 aa).

The RING-type zinc-finger motif lies at 50–88 (CHICLQPLLQPLDTPCGHTFCYKCLRNFLQEKDFCPLDR). A disordered region spans residues 198–224 (STWSEEPGLDNPAFEESAGADTTQQPL). The NPXY motif motif lies at 208–211 (NPAF). 4 PDZ domains span residues 233-318 (TIEI…LRER), 339-422 (QVAL…ARPG), 468-554 (HITV…KALE), and 600-688 (DIVL…WPGS). The tract at residues 418–455 (IARPGKPQPGNTIREAGNHSSSSQHHTPPPYYSRPSSH) is disordered.

In terms of assembly, interacts with the phosphotyrosine interaction domain of NUMB.

The protein is Ligand of Numb protein X 2 (LNX2) of Homo sapiens (Human).